The chain runs to 525 residues: Glucose-6-phosphate isomerase (525 aa).

The active-site Proton donor is the Glu-347. Active-site residues include His-378 and Lys-493.

The protein belongs to the GPI family.

It localises to the cytoplasm. The catalysed reaction is alpha-D-glucose 6-phosphate = beta-D-fructose 6-phosphate. It functions in the pathway carbohydrate biosynthesis; gluconeogenesis. The protein operates within carbohydrate degradation; glycolysis; D-glyceraldehyde 3-phosphate and glycerone phosphate from D-glucose: step 2/4. Functionally, catalyzes the reversible isomerization of glucose-6-phosphate to fructose-6-phosphate. This is Glucose-6-phosphate isomerase from Chlamydia trachomatis serovar D (strain ATCC VR-885 / DSM 19411 / UW-3/Cx).